The chain runs to 679 residues: Patatin-like phospholipase 1 (679 aa).

2 disordered regions span residues 19 to 45 (FSDD…NAEN) and 155 to 194 (GEYE…NYNS). Composition is skewed to polar residues over residues 35–45 (YSGSETQNAEN) and 162–176 (TSSY…NTVG). The segment covering 177 to 188 (SEKEETENKNEE) has biased composition (basic and acidic residues). In terms of domain architecture, PNPLA spans 338–544 (LSLDGGGILT…KASNPALIAL (207 aa)). A GXSXG motif is present at residues 381–385 (GTSAG). Catalysis depends on Ser-383, which acts as the Nucleophile. The Proton acceptor role is filled by Asp-531. The DGA/G motif lies at 531–533 (DGA).

This sequence belongs to the patatin family.

The protein localises to the cytoplasm. The catalysed reaction is a 1,2-diacyl-sn-glycero-3-phosphocholine + H2O = a 1-acyl-sn-glycero-3-phosphocholine + a fatty acid + H(+). It catalyses the reaction 1,2-dihexadecanoyl-sn-glycero-3-phosphocholine + H2O = 1-hexadecanoyl-sn-glycero-3-phosphocholine + hexadecanoate + H(+). Functionally, hydrolyzes the ester bond of the fatty acyl group attached at the sn-2 position of phospholipids such as phosphatidylcholine. Involved in gametogenesis; however, it is not clear whether it is involved in gametocytes development in host erythrocytes or in gametocyte activation in the mosquito midgut. Involved in gametocyte development in host erythrocytes; however, not involved in gametocytes activation including male gamete exflagellation. Involved in the rounding up of gametocytes following activation in the mosquito midgut; however, not required for gametocyte development in host erythrocytes. Required for exflagellation of activated male gametocytes. Involved in gametocytes egress from host erythrocytes by promoting the relocalization of perforin-like protein PLP2-containing vesicles to the periphery of gametocytes; PLP2 secretion is required for permeabilization of the erythrocyte membrane and thus, promotes gametocyte egress. Dispensable for asexual blood stage development. The sequence is that of Patatin-like phospholipase 1 from Plasmodium falciparum (isolate NF54).